A 385-amino-acid chain; its full sequence is Succinate--CoA ligase [ADP-forming] subunit beta (385 aa).

The 236-residue stretch at 9–244 (KEILRKYGVP…QDEEDPLETR (236 aa)) folds into the ATP-grasp domain. ATP-binding positions include Lys46, 53 to 55 (GRG), Glu99, Cys102, and Glu107. Residues Asn199 and Asp213 each contribute to the Mg(2+) site. Substrate contacts are provided by residues Asn264 and 321–323 (GIM).

This sequence belongs to the succinate/malate CoA ligase beta subunit family. As to quaternary structure, heterotetramer of two alpha and two beta subunits. Mg(2+) serves as cofactor.

It carries out the reaction succinate + ATP + CoA = succinyl-CoA + ADP + phosphate. It catalyses the reaction GTP + succinate + CoA = succinyl-CoA + GDP + phosphate. It participates in carbohydrate metabolism; tricarboxylic acid cycle; succinate from succinyl-CoA (ligase route): step 1/1. Functionally, succinyl-CoA synthetase functions in the citric acid cycle (TCA), coupling the hydrolysis of succinyl-CoA to the synthesis of either ATP or GTP and thus represents the only step of substrate-level phosphorylation in the TCA. The beta subunit provides nucleotide specificity of the enzyme and binds the substrate succinate, while the binding sites for coenzyme A and phosphate are found in the alpha subunit. The chain is Succinate--CoA ligase [ADP-forming] subunit beta from Rickettsia bellii (strain RML369-C).